Here is a 95-residue protein sequence, read N- to C-terminus: Protein TusB (95 aa).

It belongs to the DsrH/TusB family. In terms of assembly, heterohexamer, formed by a dimer of trimers. The hexameric TusBCD complex contains 2 copies each of TusB, TusC and TusD. The TusBCD complex interacts with TusE.

It is found in the cytoplasm. In terms of biological role, part of a sulfur-relay system required for 2-thiolation of 5-methylaminomethyl-2-thiouridine (mnm(5)s(2)U) at tRNA wobble positions. The sequence is that of Protein TusB from Buchnera aphidicola subsp. Baizongia pistaciae (strain Bp).